The sequence spans 318 residues: 4-hydroxy-3-methylbut-2-enyl diphosphate reductase (318 aa).

Cys12 serves as a coordination point for [4Fe-4S] cluster. His41 and His74 together coordinate (2E)-4-hydroxy-3-methylbut-2-enyl diphosphate. Dimethylallyl diphosphate is bound by residues His41 and His74. Isopentenyl diphosphate is bound by residues His41 and His74. Position 96 (Cys96) interacts with [4Fe-4S] cluster. His124 contacts (2E)-4-hydroxy-3-methylbut-2-enyl diphosphate. His124 provides a ligand contact to dimethylallyl diphosphate. His124 provides a ligand contact to isopentenyl diphosphate. Glu126 serves as the catalytic Proton donor. Thr167 is a (2E)-4-hydroxy-3-methylbut-2-enyl diphosphate binding site. Cys197 contacts [4Fe-4S] cluster. Residues Ser225, Ser226, Asn227, and Ser269 each contribute to the (2E)-4-hydroxy-3-methylbut-2-enyl diphosphate site. Positions 225, 226, 227, and 269 each coordinate dimethylallyl diphosphate. Positions 225, 226, 227, and 269 each coordinate isopentenyl diphosphate.

Belongs to the IspH family. Requires [4Fe-4S] cluster as cofactor.

It catalyses the reaction isopentenyl diphosphate + 2 oxidized [2Fe-2S]-[ferredoxin] + H2O = (2E)-4-hydroxy-3-methylbut-2-enyl diphosphate + 2 reduced [2Fe-2S]-[ferredoxin] + 2 H(+). The enzyme catalyses dimethylallyl diphosphate + 2 oxidized [2Fe-2S]-[ferredoxin] + H2O = (2E)-4-hydroxy-3-methylbut-2-enyl diphosphate + 2 reduced [2Fe-2S]-[ferredoxin] + 2 H(+). It functions in the pathway isoprenoid biosynthesis; dimethylallyl diphosphate biosynthesis; dimethylallyl diphosphate from (2E)-4-hydroxy-3-methylbutenyl diphosphate: step 1/1. Its pathway is isoprenoid biosynthesis; isopentenyl diphosphate biosynthesis via DXP pathway; isopentenyl diphosphate from 1-deoxy-D-xylulose 5-phosphate: step 6/6. Functionally, catalyzes the conversion of 1-hydroxy-2-methyl-2-(E)-butenyl 4-diphosphate (HMBPP) into a mixture of isopentenyl diphosphate (IPP) and dimethylallyl diphosphate (DMAPP). Acts in the terminal step of the DOXP/MEP pathway for isoprenoid precursor biosynthesis. The chain is 4-hydroxy-3-methylbut-2-enyl diphosphate reductase from Francisella philomiragia subsp. philomiragia (strain ATCC 25017 / CCUG 19701 / FSC 153 / O#319-036).